The sequence spans 286 residues: Probable syntaxin-7B (286 aa).

Over 1–257 the chain is Cytoplasmic; sequence MTDRQPLISK…YVYKSSYRKK (257 aa). Over residues 97–107 the composition is skewed to basic and acidic residues; the sequence is LSTSNKKESSH. The segment at 97-160 is disordered; the sequence is LSTSNKKESS…TNNNNNNNNN (64 aa). A compositionally biased stretch (low complexity) spans 114–160; it reads QQQQQQQNNGNSNNNGYNTRGGYNQQQQQQQQQYNDYTNNNNNNNNN. In terms of domain architecture, t-SNARE coiled-coil homology spans 185–247; the sequence is NRILDERNAN…EDAVVELEKA (63 aa). A helical; Anchor for type IV membrane protein membrane pass occupies residues 258-278; it reads MIIFVICLLVTLVAVGIFLAI. At 279–286 the chain is on the vesicular side; the sequence is YYGVIKKK.

Belongs to the syntaxin family.

The protein localises to the membrane. The polypeptide is Probable syntaxin-7B (syn7B) (Dictyostelium discoideum (Social amoeba)).